The primary structure comprises 190 residues: Syndecan-2-B (190 aa).

Residues 1 to 22 (MRNVWLIVPFALLAAFSGETWA) form the signal peptide. At 23 to 136 (QADRDLYIDS…NLFHRTEVLA (114 aa)) the chain is on the extracellular side. The interval 34 to 60 (ESSGNYPVDDDDYSSGSGSGIPAHDDD) is disordered. O-linked (Xyl...) (glycosaminoglycan) serine glycosylation is found at Ser36, Ser48, Ser50, and Ser52. The chain crosses the membrane as a helical span at residues 137–157 (AVIAGGGIGFLFAVFLILLLV). Over 158–190 (YRMRKKDEGSYDLGERKPSSAVYQKAPTKEFYA) the chain is Cytoplasmic. The segment at 167-190 (SYDLGERKPSSAVYQKAPTKEFYA) is disordered.

This sequence belongs to the syndecan proteoglycan family. O-glycosylated; contains both heparan sulfate and chondroitin sulfate.

It localises to the membrane. Its function is as follows. Cell surface proteoglycan. This is Syndecan-2-B (sdc2-b) from Xenopus laevis (African clawed frog).